Here is a 401-residue protein sequence, read N- to C-terminus: Carbamoyl phosphate synthase small chain (401 aa).

A CPSase region spans residues 1-203; sequence MTETAPWTTR…KGYGTLGEAD (203 aa). 3 residues coordinate L-glutamine: Ser-56, Gly-255, and Gly-257. Positions 207-395 constitute a Glutamine amidotransferase type-1 domain; the sequence is HVVCVDFGVK…VNLLRENKGE (189 aa). Residue Cys-284 is the Nucleophile of the active site. L-glutamine-binding residues include Leu-285, Gln-288, Asn-326, Gly-328, and Phe-329. Catalysis depends on residues His-368 and Glu-370.

This sequence belongs to the CarA family. In terms of assembly, composed of two chains; the small (or glutamine) chain promotes the hydrolysis of glutamine to ammonia, which is used by the large (or ammonia) chain to synthesize carbamoyl phosphate. Tetramer of heterodimers (alpha,beta)4.

It catalyses the reaction hydrogencarbonate + L-glutamine + 2 ATP + H2O = carbamoyl phosphate + L-glutamate + 2 ADP + phosphate + 2 H(+). The catalysed reaction is L-glutamine + H2O = L-glutamate + NH4(+). It functions in the pathway amino-acid biosynthesis; L-arginine biosynthesis; carbamoyl phosphate from bicarbonate: step 1/1. Its pathway is pyrimidine metabolism; UMP biosynthesis via de novo pathway; (S)-dihydroorotate from bicarbonate: step 1/3. Its function is as follows. Small subunit of the glutamine-dependent carbamoyl phosphate synthetase (CPSase). CPSase catalyzes the formation of carbamoyl phosphate from the ammonia moiety of glutamine, carbonate, and phosphate donated by ATP, constituting the first step of 2 biosynthetic pathways, one leading to arginine and/or urea and the other to pyrimidine nucleotides. The small subunit (glutamine amidotransferase) binds and cleaves glutamine to supply the large subunit with the substrate ammonia. This chain is Carbamoyl phosphate synthase small chain, found in Agrobacterium fabrum (strain C58 / ATCC 33970) (Agrobacterium tumefaciens (strain C58)).